A 123-amino-acid chain; its full sequence is Small ribosomal subunit protein uS12 (123 aa).

Aspartate 89 bears the 3-methylthioaspartic acid mark.

The protein belongs to the universal ribosomal protein uS12 family. In terms of assembly, part of the 30S ribosomal subunit. Contacts proteins S8 and S17. May interact with IF1 in the 30S initiation complex.

Functionally, with S4 and S5 plays an important role in translational accuracy. Its function is as follows. Interacts with and stabilizes bases of the 16S rRNA that are involved in tRNA selection in the A site and with the mRNA backbone. Located at the interface of the 30S and 50S subunits, it traverses the body of the 30S subunit contacting proteins on the other side and probably holding the rRNA structure together. The combined cluster of proteins S8, S12 and S17 appears to hold together the shoulder and platform of the 30S subunit. The protein is Small ribosomal subunit protein uS12 of Brucella anthropi (strain ATCC 49188 / DSM 6882 / CCUG 24695 / JCM 21032 / LMG 3331 / NBRC 15819 / NCTC 12168 / Alc 37) (Ochrobactrum anthropi).